Reading from the N-terminus, the 207-residue chain is Small ribosomal subunit protein uS4c (207 aa).

The S4 RNA-binding domain occupies 92 to 155 (MRLDNILFRL…TYQSILSKRI (64 aa)).

Belongs to the universal ribosomal protein uS4 family. Part of the 30S ribosomal subunit. Contacts protein S5. The interaction surface between S4 and S5 is involved in control of translational fidelity.

It is found in the plastid. The protein resides in the chloroplast. One of the primary rRNA binding proteins, it binds directly to 16S rRNA where it nucleates assembly of the body of the 30S subunit. Its function is as follows. With S5 and S12 plays an important role in translational accuracy. This chain is Small ribosomal subunit protein uS4c (rps4), found in Equisetum giganteum (Giant horsetail).